A 1159-amino-acid polypeptide reads, in one-letter code: Caspase recruitment domain-containing protein 11 (1159 aa).

Residues 18–110 enclose the CARD domain; the sequence is EEEALWDNVE…ELYKLVTGKE (93 aa). Residues 111–128 are linker; the sequence is PTRRFSTIVVEEGHEGLT. Residues 176-449 adopt a coiled-coil conformation; the sequence is FQERYYKMKE…KDNGSLDQSL (274 aa). The interval 441-496 is disordered; sequence DNGSLDQSLPRHLPATIISQNLGDTSPRTNGQEADDSSTSEESPEDSKYFLPYHPP. A phosphoserine mark is found at serine 448 and serine 466. The interval 450 to 671 is inhibitory domain (ID); the sequence is PRHLPATIIS…GHVRGTGPLV (222 aa). The span at 457 to 472 shows a compositional bias: polar residues; sequence IISQNLGDTSPRTNGQ. The segment covering 473-484 has biased composition (acidic residues); the sequence is EADDSSTSEESP. A phosphoserine mark is found at serine 512 and serine 540. Residues 532 to 578 form a disordered region; it reads HEEDFTDGSPSSSRSLPVTSSFSKMQPHRSRSSIMSITAEPPGNDSI. Positions 540–554 are enriched in low complexity; sequence SPSSSRSLPVTSSFS. Serine 564 is modified (phosphoserine; by PKC/PRKCB and PKC/PRKCQ). Phosphoserine is present on serine 598. Residues 610-631 form a disordered region; the sequence is NHERYSFGPPSIHSSSSSHQSE. A compositionally biased stretch (low complexity) spans 620–630; that stretch reads SIHSSSSSHQS. Serine 649 and serine 657 each carry phosphoserine; by PKC/PRKCB and PKC/PRKCQ. The 89-residue stretch at 672–760 folds into the PDZ domain; sequence QHTTLNGDGL…LITLHYKVNH (89 aa). Residues serine 891 and serine 930 each carry the phosphoserine modification. Positions 978 to 1145 constitute a Guanylate kinase-like domain; that stretch reads RRRPVLFTPT…LLRVLKDKIV (168 aa).

Homodimer; disulfide-linked. Homomultimer; polymerizes following activation, forming a nucleating helical template that seeds BCL10-filament formation via a CARD-CARD interaction. Interacts (via CARD domain) with BCL10 (via CARD domain); interaction takes place following CARD11 activation and polymerization, leading to the formation of a filamentous CBM complex assembly. Component of a CBM complex (CARD11-BCL10-MALT1) complex involved in NF-kappa-B activation. Found in a membrane raft complex, at least composed of BCL10, CARD11, DPP4 and IKBKB. Interacts (via PDZ domain) with DPP4 (via cytoplasmic tail). In terms of processing, phosphorylation at Ser-564, Ser-649 and Ser-657 by PRKCB and PRKCQ leads to a shift from an inactive to an active form that activates the NF-kappa-B signaling.

It is found in the cytoplasm. It localises to the membrane raft. Its activity is regulated as follows. Maintained in an autoinhibited state via homodimerization in which the CARD domain forms an extensive interaction with the adjacent linker and coiled-coil regions. Activation downstream of T-cell receptor (TCR) by phosphorylation by PRKCB and PRKCQ triggers CARD11 homooligomerization and BCL10 recruitment, followed by activation of NF-kappa-B. Adapter protein that plays a key role in adaptive immune response by transducing the activation of NF-kappa-B downstream of T-cell receptor (TCR) and B-cell receptor (BCR) engagement. Transduces signals downstream TCR or BCR activation via the formation of a multiprotein complex together with BCL10 and MALT1 that induces NF-kappa-B and MAP kinase p38 (MAPK11, MAPK12, MAPK13 and/or MAPK14) pathways. Upon activation in response to TCR or BCR triggering, CARD11 homooligomerizes to form a nucleating helical template that recruits BCL10 via CARD-CARD interaction, thereby promoting polymerization of BCL10 and subsequent recruitment of MALT1: this leads to I-kappa-B kinase (IKK) phosphorylation and degradation, and release of NF-kappa-B proteins for nuclear translocation. Its binding to DPP4 induces T-cell proliferation and NF-kappa-B activation in a T-cell receptor/CD3-dependent manner. Promotes linear ubiquitination of BCL10 by promoting the targeting of BCL10 to RNF31/HOIP. Stimulates the phosphorylation of BCL10. Also activates the TORC1 signaling pathway. The protein is Caspase recruitment domain-containing protein 11 of Mus musculus (Mouse).